A 195-amino-acid polypeptide reads, in one-letter code: COMM domain-containing protein 3 (195 aa).

Positions 124 to 193 constitute a COMM domain; sequence HITDVSWRLE…DASKSLERAT (70 aa).

It belongs to the COMM domain-containing protein 3 family. As to quaternary structure, component of the commander complex consisting of the CCC subcomplex and the retriever subcomplex. Component of the CCC (COMMD/CCDC22/CCDC93) subcomplex consisting of COMMD1, COMMD2, COMMD3, COMMD4, COMMD5, COMMD6, COMMD7, COMMD8, COMMD9, COMMD10, CCDC22 and CCDC93; within the complex forms a heterodimer with COMMD2. Interacts with NFKB1/p105. Interacts with CCDC22, CCDC93, SCNN1B, CUL3, CUL4A, CUL4B, CUL5.

Its subcellular location is the cytoplasm. It is found in the nucleus. Functionally, scaffold protein in the commander complex that is essential for endosomal recycling of transmembrane cargos; the commander complex is composed of the CCC subcomplex and the retriever subcomplex. May modulate activity of cullin-RING E3 ubiquitin ligase (CRL) complexes. May down-regulate activation of NF-kappa-B. Modulates Na(+) transport in epithelial cells by regulation of apical cell surface expression of amiloride-sensitive sodium channel (ENaC) subunits. The chain is COMM domain-containing protein 3 (Commd3) from Mus musculus (Mouse).